Reading from the N-terminus, the 324-residue chain is Glyoxylate/hydroxypyruvate reductase B (324 aa).

Catalysis depends on residues R237 and E266. The Proton donor role is filled by H285.

Belongs to the D-isomer specific 2-hydroxyacid dehydrogenase family. GhrB subfamily. Homodimer.

The protein resides in the cytoplasm. It catalyses the reaction glycolate + NADP(+) = glyoxylate + NADPH + H(+). It carries out the reaction (R)-glycerate + NAD(+) = 3-hydroxypyruvate + NADH + H(+). The enzyme catalyses (R)-glycerate + NADP(+) = 3-hydroxypyruvate + NADPH + H(+). In terms of biological role, catalyzes the NADPH-dependent reduction of glyoxylate and hydroxypyruvate into glycolate and glycerate, respectively. This Salmonella choleraesuis (strain SC-B67) protein is Glyoxylate/hydroxypyruvate reductase B.